Here is a 392-residue protein sequence, read N- to C-terminus: GDP-mannose transporter (392 aa).

Over residues 1–11 (MDDKKNEDLEM) the composition is skewed to basic and acidic residues. Positions 1–25 (MDDKKNEDLEMRNFNGRSSPSQRDP) are disordered. Topologically, residues 1-45 (MDDKKNEDLEMRNFNGRSSPSQRDPFLAKPGAAAKRGNSAFDLSN) are cytoplasmic. The helical transmembrane segment at 46 to 66 (VTNSPGISILAYCLASISMTV) threads the bilayer. At 67-76 (TNKYCVSGSN) the chain is on the lumenal side. A helical membrane pass occupies residues 77-97 (WNLNFFYLAIQSVVCIIAIII). Over 98-116 (CKQAGLITNLAPFDTKKAK) the chain is Cytoplasmic. A helical transmembrane segment spans residues 117–139 (TWFPISLLLVGMIYTSTKALQFL). Topologically, residues 140-142 (SVP) are lumenal. A helical membrane pass occupies residues 143–165 (VYTIFKNLTIIVIAYGEVLWFGG). Residues 166–171 (SVTPSA) are Cytoplasmic-facing. The chain crosses the membrane as a helical span at residues 172–191 (LFSFGLMVLSSVVAAWADIQ). At 192-210 (HALYGGGAAQSAEAAAALS) the chain is on the lumenal side. The chain crosses the membrane as a helical span at residues 211 to 231 (TLNAGYAWMGMNVFCTAAYVL). Residues 232-246 (SMRKVIKKMNFKDWD) lie on the Cytoplasmic side of the membrane. A helical membrane pass occupies residues 247 to 267 (TMFYNNLLTIPVLFVCSFIFE). Asparagine 268 and asparagine 273 each carry an N-linked (GlcNAc...) asparagine glycan. The Lumenal segment spans residues 268-285 (NWSSENLTKNFPLETRNN). The helical transmembrane segment at 286–306 (LILGMIYSGLATIFISYCSAW) threads the bilayer. Residues 307–314 (CIRVTSST) are Cytoplasmic-facing. A helical transmembrane segment spans residues 315 to 337 (TYSMVGALNKLPIAVSGLVFFAA). The Lumenal portion of the chain corresponds to 338–340 (PVT). A helical transmembrane segment spans residues 341-360 (FGSVSAIFIGFVSGIVYAWA). Residues 361-392 (KVRQNQSKGNILPTTQPVMSASSQSNRDAAKA) are Cytoplasmic-facing. Positions 373-392 (PTTQPVMSASSQSNRDAAKA) are disordered.

Belongs to the TPT transporter family. SLC35D subfamily. In terms of assembly, homooligomer.

Its subcellular location is the golgi apparatus membrane. It is found in the cytoplasmic vesicle membrane. The protein resides in the endoplasmic reticulum membrane. Functionally, involved in the import of GDP-mannose from the cytoplasm into the Golgi lumen. This chain is GDP-mannose transporter (gmt1), found in Botryotinia fuckeliana (strain B05.10) (Noble rot fungus).